An 862-amino-acid polypeptide reads, in one-letter code: Short transient receptor potential channel 7 (862 aa).

Residues 1 to 21 (MLRNSTFKNMQRRHTTLREKG) form a disordered region. The Cytoplasmic segment spans residues 1–351 (MLRNSTFKNM…GLRQQSIAVK (351 aa)). Basic residues predominate over residues 10–21 (MQRRHTTLREKG). A Phosphothreonine; by PKG/PRKG1 modification is found at Thr-15. ANK repeat units follow at residues 42 to 71 (PEEE…TLNF), 77 to 106 (MGQN…LARV), 108 to 134 (DALL…FAQG), and 163 to 192 (HDIT…RIER). Residues 352-372 (FLAVFGVSIGLPFLAIAYWIA) traverse the membrane as a helical segment. Over 373 to 383 (PCSKLGRTLRS) the chain is Extracellular. The chain crosses the membrane as a helical span at residues 384 to 404 (PFMKFVAHAVSFTIFLGLLVV). Topologically, residues 405–465 (NASDRFEGVK…KEIWEEGPRE (61 aa)) are cytoplasmic. A helical transmembrane segment spans residues 466–486 (YVLHLWNLLDFGMLSIFVASF). Topologically, residues 487–537 (TARFMAFLKATEAQLYVDQHVQDDTLHNVSLPPEVAYFTYARDKWWPSDPQ) are extracellular. Residue Asn-514 is glycosylated (N-linked (GlcNAc...) asparagine). Residues 538 to 558 (IISEGLYAIAVVLSFSRIAYI) form a helical membrane-spanning segment. Residues 559–581 (LPANESFGPLQISLGRTVKDIFK) lie on the Cytoplasmic side of the membrane. A helical membrane pass occupies residues 582–602 (FMVIFIMVFVAFMIGMFNLYS). Residues 603–651 (YYRGAKYNPAFTTVEESFKTLFWSIFGLSEVISVVLKYDHKFIENIGYV) lie on the Extracellular side of the membrane. The helical transmembrane segment at 652 to 672 (LYGVYNVTMVVVLLNMLIAMI) threads the bilayer. Residues 673–862 (NNSYQEIEED…HLRVNKGKDI (190 aa)) lie on the Cytoplasmic side of the membrane.

Belongs to the transient receptor (TC 1.A.4) family. STrpC subfamily. TRPC7 sub-subfamily. Interacts with MX1 and RNF24. Interacts (via ANK-repeat domains) with PRKG1. Phosphorylation by PRKG1 at Thr-15 negatively regulates TRPC7 activity.

It localises to the cell membrane. It is found in the nucleus envelope. It catalyses the reaction Ca(2+)(in) = Ca(2+)(out). In terms of biological role, forms a receptor-activated non-selective calcium permeant cation channel. Probably is operated by a phosphatidylinositol second messenger system activated by receptor tyrosine kinases or G-protein coupled receptors. Activated by diacylglycerol (DAG). May also be activated by intracellular calcium store depletion. In Homo sapiens (Human), this protein is Short transient receptor potential channel 7 (TRPC7).